The primary structure comprises 190 residues: MFLQVTGTATPAMPAVVFLNSWRRPLSIPLRSVKTFKPLAFFDLKGGKGMSEFHEVELKVRDYELDQFGVVNNAVYANYCQHGRHEFLESIGINCDEVARSGEALAISELTMKFLSPLRSGDKFVVKARISGTSAARIYFDHFIFKLPNQEPILEAKGIAVWLDNKYRPVRIPSSIRSKFVHFLRQDDAV.

The N-terminal 49 residues, 1–49, are a transit peptide targeting the chloroplast; that stretch reads MFLQVTGTATPAMPAVVFLNSWRRPLSIPLRSVKTFKPLAFFDLKGGKG. D66 is a catalytic residue.

The protein belongs to the 4-hydroxybenzoyl-CoA thioesterase family. As to expression, highly expressed in stems and flowers and at lower levels in rosette leaves, cauline leaves and siliques.

The protein resides in the plastid. The protein localises to the chloroplast. Functionally, acyl-ACP thioesterase involved in the production of fatty acids and beta-keto fatty acids. Can produce fatty acids of long chain (14:1 and 16:1) and beta-keto fatty acids of medium to long chain (8:0, 10:0, 12:0, 12:1, 14:0 and 16:0) when expressed in a heterologous organism (E.coli). Possesses thioesterase activity for lauroyl-ACP (12:0-ACP) in vitro. May play a role in the generation of long fatty acids in the chloroplast. This is Acyl-acyl carrier protein thioesterase ATL3, chloroplastic from Arabidopsis thaliana (Mouse-ear cress).